The sequence spans 343 residues: Glycerol-3-phosphate dehydrogenase [NAD(P)+] (343 aa).

NADPH-binding residues include tryptophan 29, arginine 49, and lysine 122. Sn-glycerol 3-phosphate contacts are provided by lysine 122, glycine 150, and serine 152. An NADPH-binding site is contributed by alanine 154. 5 residues coordinate sn-glycerol 3-phosphate: lysine 205, aspartate 258, serine 268, arginine 269, and asparagine 270. Lysine 205 acts as the Proton acceptor in catalysis. Arginine 269 lines the NADPH pocket. NADPH-binding residues include leucine 288 and glutamate 290.

This sequence belongs to the NAD-dependent glycerol-3-phosphate dehydrogenase family.

It localises to the cytoplasm. The catalysed reaction is sn-glycerol 3-phosphate + NAD(+) = dihydroxyacetone phosphate + NADH + H(+). It carries out the reaction sn-glycerol 3-phosphate + NADP(+) = dihydroxyacetone phosphate + NADPH + H(+). The protein operates within membrane lipid metabolism; glycerophospholipid metabolism. Functionally, catalyzes the reduction of the glycolytic intermediate dihydroxyacetone phosphate (DHAP) to sn-glycerol 3-phosphate (G3P), the key precursor for phospholipid synthesis. The polypeptide is Glycerol-3-phosphate dehydrogenase [NAD(P)+] (Mesorhizobium japonicum (strain LMG 29417 / CECT 9101 / MAFF 303099) (Mesorhizobium loti (strain MAFF 303099))).